The sequence spans 79 residues: Small ribosomal subunit protein uS17 (79 aa).

The protein belongs to the universal ribosomal protein uS17 family. As to quaternary structure, part of the 30S ribosomal subunit.

Its function is as follows. One of the primary rRNA binding proteins, it binds specifically to the 5'-end of 16S ribosomal RNA. In Rhizobium johnstonii (strain DSM 114642 / LMG 32736 / 3841) (Rhizobium leguminosarum bv. viciae), this protein is Small ribosomal subunit protein uS17.